Here is a 275-residue protein sequence, read N- to C-terminus: 5'-nucleotidase SurE (275 aa).

A divalent metal cation is bound by residues D12, D13, S44, and N102.

The protein belongs to the SurE nucleotidase family. The cofactor is a divalent metal cation.

It is found in the cytoplasm. The enzyme catalyses a ribonucleoside 5'-phosphate + H2O = a ribonucleoside + phosphate. Its function is as follows. Nucleotidase that shows phosphatase activity on nucleoside 5'-monophosphates. The protein is 5'-nucleotidase SurE of Synechococcus sp. (strain RCC307).